The chain runs to 344 residues: Angiopoietin-related protein 7 (344 aa).

The N-terminal stretch at 1-26 (MLKKTLSAVAWLCIFLVAFVSHPVWP) is a signal peptide. Residues 37-116 (ELTAATCCEE…IGIMQLQAAQ (80 aa)) adopt a coiled-coil conformation. N-linked (GlcNAc...) asparagine glycosylation is present at Asn56. The Fibrinogen C-terminal domain occupies 120-341 (QTSADAIYDC…RVEMKIRPED (222 aa)). The cysteines at positions 129 and 160 are disulfide-linked. N-linked (GlcNAc...) asparagine glycans are attached at residues Asn251 and Asn265. Cys283 and Cys296 form a disulfide bridge.

In terms of assembly, homotetramer; disulfide-linked.

The protein resides in the secreted. Functionally, has a role in the formation and organization of the extracellular matrix. In the eye, it functions as a mediator of dexamethasone-induced matrix deposition in the trabecular meshwork, the tissue responsible for the outflow of the ocular aqueous humor and for the maintenance of intraocular pressure. Is a negative regulator of angiogenesis in the cornea, and plays a major role in maintaining corneal avascularity and transparency. In Bos taurus (Bovine), this protein is Angiopoietin-related protein 7 (ANGPTL7).